The chain runs to 121 residues: Small ribosomal subunit protein bS16 (121 aa).

The tract at residues glycine 88–serine 121 is disordered. Basic and acidic residues predominate over residues alanine 90–lysine 111. Polar residues predominate over residues threonine 112 to serine 121.

Belongs to the bacterial ribosomal protein bS16 family.

The protein is Small ribosomal subunit protein bS16 of Prochlorococcus marinus (strain MIT 9215).